The chain runs to 249 residues: MSRTLPHLLSSDPASPFPPAEHALREPDGLLAIGGDLHPQRLLNAYAHGIFPWFSDGQPLLWWSPNPRTVFRTDAIHLSSRFRRQLRTCTWTLRADTAFAQVIAACALSPRPGQDGTWITDQMQEAYLDLHRRGYAHSVEVFDGARLVGGIYGVAIGQMFFGESMFSGASGGSKIALAALAAELHGLGWPLIDAQVENPHLMRLGAQRLQREQFLQHVATQVALPEPPGSWTQRYGERHASALAGVRLT.

The tract at residues 1–21 (MSRTLPHLLSSDPASPFPPAE) is disordered.

The protein belongs to the L/F-transferase family.

The protein localises to the cytoplasm. The enzyme catalyses N-terminal L-lysyl-[protein] + L-leucyl-tRNA(Leu) = N-terminal L-leucyl-L-lysyl-[protein] + tRNA(Leu) + H(+). The catalysed reaction is N-terminal L-arginyl-[protein] + L-leucyl-tRNA(Leu) = N-terminal L-leucyl-L-arginyl-[protein] + tRNA(Leu) + H(+). It carries out the reaction L-phenylalanyl-tRNA(Phe) + an N-terminal L-alpha-aminoacyl-[protein] = an N-terminal L-phenylalanyl-L-alpha-aminoacyl-[protein] + tRNA(Phe). Functions in the N-end rule pathway of protein degradation where it conjugates Leu, Phe and, less efficiently, Met from aminoacyl-tRNAs to the N-termini of proteins containing an N-terminal arginine or lysine. The polypeptide is Leucyl/phenylalanyl-tRNA--protein transferase (Xanthomonas campestris pv. campestris (strain 8004)).